The chain runs to 264 residues: Catechol O-methyltransferase B (264 aa).

A signal peptide spans 1–29 (MLGVLLCWCLGASVLLYVLYSWLIPAAVQ). Asn-31 carries an N-linked (GlcNAc...) asparagine glycan. Residues Val-92, Ser-122, Glu-140, and Asp-191 each contribute to the S-adenosyl-L-methionine site. Mg(2+) is bound at residue Asp-191. Lys-194 serves as a coordination point for substrate. Mg(2+) is bound by residues Asp-219 and Asn-220. Positions 220 and 249 each coordinate substrate.

This sequence belongs to the class I-like SAM-binding methyltransferase superfamily. Cation-dependent O-methyltransferase family. Mg(2+) is required as a cofactor. In terms of tissue distribution, strongly expressed in eye, diencephalon, spinal cord, hindbrain, liver, kidney and telencephalon. Also detected at very low levels in muscle, spleen, anterior gut and heart. In eye, expressed strongly in retina. In brain, expressed in the central part of the telencephalon, the periventricular gray zone of the optic tectum, the periglomerular nucleus, the olfactory bulb, and the region adjacent to the diencephalic ventricle in the hypothalamus. Expressed in gill, with strongest expression in gill filaments nearest the gill arch, and in esophageal epithelium.

Its subcellular location is the secreted. It catalyses the reaction a catechol + S-adenosyl-L-methionine = a guaiacol + S-adenosyl-L-homocysteine + H(+). Functionally, catalyzes the O-methylation, and thereby the inactivation, of catecholamine neurotransmitters and catechol hormones. This Danio rerio (Zebrafish) protein is Catechol O-methyltransferase B.